Here is a 209-residue protein sequence, read N- to C-terminus: Ribosomal RNA small subunit methyltransferase G (209 aa).

Residues Gly71, Phe76, 122–123 (AE), and Arg135 contribute to the S-adenosyl-L-methionine site.

This sequence belongs to the methyltransferase superfamily. RNA methyltransferase RsmG family.

The protein resides in the cytoplasm. Functionally, specifically methylates the N7 position of a guanine in 16S rRNA. The polypeptide is Ribosomal RNA small subunit methyltransferase G (Flavobacterium johnsoniae (strain ATCC 17061 / DSM 2064 / JCM 8514 / BCRC 14874 / CCUG 350202 / NBRC 14942 / NCIMB 11054 / UW101) (Cytophaga johnsonae)).